A 235-amino-acid chain; its full sequence is NADH-quinone oxidoreductase subunit C (235 aa).

The protein belongs to the complex I 30 kDa subunit family. As to quaternary structure, NDH-1 is composed of 14 different subunits. Subunits NuoB, C, D, E, F, and G constitute the peripheral sector of the complex.

It is found in the cell membrane. The enzyme catalyses a quinone + NADH + 5 H(+)(in) = a quinol + NAD(+) + 4 H(+)(out). Functionally, NDH-1 shuttles electrons from NADH, via FMN and iron-sulfur (Fe-S) centers, to quinones in the respiratory chain. The immediate electron acceptor for the enzyme in this species is believed to be a menaquinone. Couples the redox reaction to proton translocation (for every two electrons transferred, four hydrogen ions are translocated across the cytoplasmic membrane), and thus conserves the redox energy in a proton gradient. In Mycobacterium avium (strain 104), this protein is NADH-quinone oxidoreductase subunit C.